Consider the following 456-residue polypeptide: UPF0496 protein 4 (456 aa).

Residues 205–221 form a helical membrane-spanning segment; the sequence is SVTVFVCSIFVAVLSGS.

The protein belongs to the ROH1 family.

Its subcellular location is the membrane. This chain is UPF0496 protein 4, found in Oryza sativa subsp. indica (Rice).